A 150-amino-acid polypeptide reads, in one-letter code: Arginine repressor (150 aa).

It belongs to the ArgR family.

It localises to the cytoplasm. It participates in amino-acid biosynthesis; L-arginine biosynthesis [regulation]. Its function is as follows. Regulates arginine biosynthesis genes. This Staphylococcus carnosus (strain TM300) protein is Arginine repressor.